Consider the following 295-residue polypeptide: 33 kDa chaperonin (295 aa).

2 cysteine pairs are disulfide-bonded: Cys-238-Cys-240 and Cys-271-Cys-274.

It belongs to the HSP33 family. Post-translationally, under oxidizing conditions two disulfide bonds are formed involving the reactive cysteines. Under reducing conditions zinc is bound to the reactive cysteines and the protein is inactive.

Its subcellular location is the cytoplasm. In terms of biological role, redox regulated molecular chaperone. Protects both thermally unfolding and oxidatively damaged proteins from irreversible aggregation. Plays an important role in the bacterial defense system toward oxidative stress. This chain is 33 kDa chaperonin, found in Levilactobacillus brevis (strain ATCC 367 / BCRC 12310 / CIP 105137 / JCM 1170 / LMG 11437 / NCIMB 947 / NCTC 947) (Lactobacillus brevis).